The sequence spans 208 residues: Protein-L-isoaspartate O-methyltransferase (208 aa).

Serine 59 is an active-site residue.

Belongs to the methyltransferase superfamily. L-isoaspartyl/D-aspartyl protein methyltransferase family.

It is found in the cytoplasm. The enzyme catalyses [protein]-L-isoaspartate + S-adenosyl-L-methionine = [protein]-L-isoaspartate alpha-methyl ester + S-adenosyl-L-homocysteine. Its function is as follows. Catalyzes the methyl esterification of L-isoaspartyl residues in peptides and proteins that result from spontaneous decomposition of normal L-aspartyl and L-asparaginyl residues. It plays a role in the repair and/or degradation of damaged proteins. The chain is Protein-L-isoaspartate O-methyltransferase from Serratia proteamaculans (strain 568).